The following is a 392-amino-acid chain: Aspartate aminotransferase (392 aa).

Residues Gly-40, Trp-126, and Asn-176 each contribute to the L-aspartate site. Lys-239 carries the N6-(pyridoxal phosphate)lysine modification.

This sequence belongs to the class-I pyridoxal-phosphate-dependent aminotransferase family. Homodimer. Requires pyridoxal 5'-phosphate as cofactor.

The protein resides in the cytoplasm. It catalyses the reaction L-aspartate + 2-oxoglutarate = oxaloacetate + L-glutamate. The chain is Aspartate aminotransferase from Bacillus sp. (strain YM-2).